Reading from the N-terminus, the 568-residue chain is Acetyl-coenzyme A carboxylase carboxyl transferase subunits beta/alpha (568 aa).

The segment at 1-253 (MAEPARTLAQ…QTAEYLRDAG (253 aa)) is acetyl-coenzyme A carboxylase carboxyl transferase subunit beta. In terms of domain architecture, CoA carboxyltransferase N-terminal spans 21–290 (RWTRCPNCRS…APAAERGYRT (270 aa)). Positions 21-536 (RWTRCPNCRS…AAALRASIGE (516 aa)) are carboxyltransferase. The Zn(2+) site is built by C25, C28, C44, and C47. Residues 25 to 47 (CPNCRSLVYLRRLRRNGHVCPDC) form a C4-type zinc finger. The interval 254–559 (MVDLVVPRHE…RRRFDRFGDP (306 aa)) is acetyl-coenzyme A carboxylase carboxyl transferase subunit alpha. The CoA carboxyltransferase C-terminal domain occupies 286–536 (RGYRTRPRPA…AAALRASIGE (251 aa)).

In the N-terminal section; belongs to the AccD/PCCB family. It in the C-terminal section; belongs to the AccA family. As to quaternary structure, acetyl-CoA carboxylase is a heterotetramer composed of biotin carboxyl carrier protein (AccB), biotin carboxylase (AccC) and two subunits of ACCase subunit beta/alpha. It depends on Zn(2+) as a cofactor.

Its subcellular location is the cytoplasm. It carries out the reaction N(6)-carboxybiotinyl-L-lysyl-[protein] + acetyl-CoA = N(6)-biotinyl-L-lysyl-[protein] + malonyl-CoA. It participates in lipid metabolism; malonyl-CoA biosynthesis; malonyl-CoA from acetyl-CoA: step 1/1. Component of the acetyl coenzyme A carboxylase (ACC) complex. Biotin carboxylase (BC) catalyzes the carboxylation of biotin on its carrier protein (BCCP) and then the CO(2) group is transferred by the transcarboxylase to acetyl-CoA to form malonyl-CoA. The polypeptide is Acetyl-coenzyme A carboxylase carboxyl transferase subunits beta/alpha (accD) (Saccharopolyspora erythraea (strain ATCC 11635 / DSM 40517 / JCM 4748 / NBRC 13426 / NCIMB 8594 / NRRL 2338)).